A 621-amino-acid polypeptide reads, in one-letter code: MBT domain-containing protein 1 (621 aa).

Residues 1–21 (MEKTKDPADRSSRSERKRRDS) show a composition bias toward basic and acidic residues. Residues 1–55 (MEKTKDPADRSSRSERKRRDSFGMFDGYDSCSEDTSSSSSSDESEEEVAPLPSSL) are disordered. A compositionally biased stretch (low complexity) spans 29-41 (DSCSEDTSSSSSS). The FCS-type zinc-finger motif lies at 68-103 (PDGKSGMATCEMCGMVGVRDAFYSKTKRFCSVSCSR). Zn(2+)-binding residues include C77, C80, C97, and C101. MBT repeat units follow at residues 164–268 (FSWG…LVPP), 276–373 (TNWK…IGHR), 374–479 (FKRT…LTPP), and 487–583 (FKWF…LQPP). The disordered stretch occupies residues 581–621 (QPPAPQSNKDGQSNVSKQKKKSKSQPYKGHKKNFRKPGNRP). Residues 597-621 (KQKKKSKSQPYKGHKKNFRKPGNRP) are compositionally biased toward basic residues.

As to quaternary structure, monomer. Component of the NuA4 histone acetyltransferase complex.

It is found in the nucleus. It localises to the chromosome. Functionally, chromatin reader component of the NuA4 histone acetyltransferase complex, a multiprotein complex involved in transcriptional activation of select genes principally by acetylation of nucleosomal histones H4 and H2A. The NuA4 complex plays a direct role in repair of DNA double-strand breaks (DSBs) by promoting homologous recombination (HR). MBTD1 specifically recognizes and binds monomethylated and dimethylated 'Lys-20' on histone H4 (H4K20me1 and H4K20me2, respectively). In the NuA4 complex, MBTD1 promotes recruitment of the complex to H4K20me marks by competing with TP53BP1 for binding to H4K20me. Following recruitment to H4K20me at DNA breaks, the NuA4 complex catalyzes acetylation of 'Lys-15' on histone H2A (H2AK15), blocking the ubiquitination mark required for TP53BP1 localization at DNA breaks, thereby promoting homologous recombination (HR). The polypeptide is MBT domain-containing protein 1 (Xenopus laevis (African clawed frog)).